The primary structure comprises 289 residues: Golgi to ER traffic protein 2 (289 aa).

Residues 1-10 (MSEVSEAEKR) show a composition bias toward basic and acidic residues. Residues 1–68 (MSEVSEAEKR…LQRGSNSGQS (68 aa)) form a disordered region. Over 1–153 (MSEVSEAEKR…VGVHQFQVRQ (153 aa)) the chain is Cytoplasmic. Positions 11 to 21 (RILREKRKQKF) are enriched in basic residues. The span at 33 to 68 (ITTQQPGGASGDSTVTSAEISDNEGSLQRGSNSGQS) shows a compositional bias: polar residues. Residues 154-173 (LKAYMLLLRWAILLPFIYYV) traverse the membrane as a helical segment. At 174-196 (MHPGTAHWLHTSRFLHFVMEPRN) the chain is on the lumenal side. Residues 197–216 (FFMVFTTFEVASISIYYQVL) traverse the membrane as a helical segment. Topologically, residues 217-263 (LTLERTNKVNSLSYSSKLVTWAGLVPDGMLPIDNLQGKVVVALHYWD) are cytoplasmic. The helical transmembrane segment at 264–284 (ILSMYLTDLSLCLVAAGLMKY) threads the bilayer. Residues 285–289 (YHAAP) are Lumenal-facing.

Belongs to the GET2 family. As to quaternary structure, component of the Golgi to ER traffic (GET) complex, which is composed of GET1, GET2 and GET3. Within the complex, GET1 and GET2 form a heterotetramer which is stabilized by phosphatidylinositol binding and which binds to the GET3 homodimer.

It is found in the endoplasmic reticulum membrane. Its subcellular location is the golgi apparatus membrane. Functionally, required for the post-translational delivery of tail-anchored (TA) proteins to the endoplasmic reticulum. Together with GET1, acts as a membrane receptor for soluble GET3, which recognizes and selectively binds the transmembrane domain of TA proteins in the cytosol. The GET complex cooperates with the HDEL receptor ERD2 to mediate the ATP-dependent retrieval of resident ER proteins that contain a C-terminal H-D-E-L retention signal from the Golgi to the ER. The protein is Golgi to ER traffic protein 2 of Eremothecium gossypii (strain ATCC 10895 / CBS 109.51 / FGSC 9923 / NRRL Y-1056) (Yeast).